The following is a 568-amino-acid chain: MVLGPEQKMSDDSVSGDHGESASLGNINPAYSNPSLSQSPGDSEEYFATYFNEKISIPEEEYSCFSFRKLWAFTGPGFLMSIAYLDPGNIESDLQSGAVAGFKLLWILLLATLVGLLLQRLAARLGVVTGLHLAEVCHRQYPKVPRVILWLMVELAIIGSDMQEVIGSAIAINLLSVGRIPLWGGVLITIADTFVFLFLDKYGLRKLEAFFGFLITIMALTFGYEYVTVKPSQSQVLKGMFVPSCSGCRTPQIEQAVGIVGAVIMPHNMYLHSALVKSRQVNRNNKQEVREANKYFFIESCIALFVSFIINVFVVSVFAEAFFGKTNEQVVEVCTNTSSPHAGLFPKDNSTLAVDIYKGGVVLGCYFGPAALYIWAVGILAAGQSSTMTGTYSGQFVMEGFLNLKWSRFARVVLTRSIAIIPTLLVAVFQDVEHLTGMNDFLNVLQSLQLPFALIPILTFTSLRPVMSDFANGLGWRIAGGILVLIICSINMYFVVVYVRDLGHVALYVVAAVVSVAYLGFVFYLGWQCLIALGMSFLDCGHTCHLGLTAQPELYLLNTMDADSLVSR.

Residues 1 to 40 form a disordered region; sequence MVLGPEQKMSDDSVSGDHGESASLGNINPAYSNPSLSQSP. At 1-69 the chain is on the cytoplasmic side; the sequence is MVLGPEQKMS…EEYSCFSFRK (69 aa). Basic and acidic residues predominate over residues 8–20; it reads KMSDDSVSGDHGE. A compositionally biased stretch (polar residues) spans 23-40; it reads SLGNINPAYSNPSLSQSP. A helical membrane pass occupies residues 70-90; it reads LWAFTGPGFLMSIAYLDPGNI. Residues 91–96 are Extracellular-facing; that stretch reads ESDLQS. The helical transmembrane segment at 97–117 threads the bilayer; it reads GAVAGFKLLWILLLATLVGLL. The Cytoplasmic portion of the chain corresponds to 118–154; it reads LQRLAARLGVVTGLHLAEVCHRQYPKVPRVILWLMVE. A helical transmembrane segment spans residues 155–175; the sequence is LAIIGSDMQEVIGSAIAINLL. Over 176-179 the chain is Extracellular; sequence SVGR. A helical transmembrane segment spans residues 180-200; that stretch reads IPLWGGVLITIADTFVFLFLD. The Cytoplasmic portion of the chain corresponds to 201 to 208; the sequence is KYGLRKLE. A helical membrane pass occupies residues 209-229; that stretch reads AFFGFLITIMALTFGYEYVTV. The Extracellular portion of the chain corresponds to 230–255; it reads KPSQSQVLKGMFVPSCSGCRTPQIEQ. A helical transmembrane segment spans residues 256-276; that stretch reads AVGIVGAVIMPHNMYLHSALV. Topologically, residues 277-301 are cytoplasmic; that stretch reads KSRQVNRNNKQEVREANKYFFIESC. A helical membrane pass occupies residues 302-322; the sequence is IALFVSFIINVFVVSVFAEAF. Residues 323–360 are Extracellular-facing; it reads FGKTNEQVVEVCTNTSSPHAGLFPKDNSTLAVDIYKGG. 2 N-linked (GlcNAc...) asparagine glycosylation sites follow: Asn336 and Asn349. A helical membrane pass occupies residues 361–381; sequence VVLGCYFGPAALYIWAVGILA. The Cytoplasmic segment spans residues 382–408; sequence AGQSSTMTGTYSGQFVMEGFLNLKWSR. Residues 409–429 form a helical membrane-spanning segment; that stretch reads FARVVLTRSIAIIPTLLVAVF. The Extracellular segment spans residues 430-440; sequence QDVEHLTGMND. Residues 441-461 form a helical membrane-spanning segment; that stretch reads FLNVLQSLQLPFALIPILTFT. At 462-482 the chain is on the cytoplasmic side; it reads SLRPVMSDFANGLGWRIAGGI. A helical transmembrane segment spans residues 483–503; the sequence is LVLIICSINMYFVVVYVRDLG. Residues 504–506 are Extracellular-facing; sequence HVA. A helical membrane pass occupies residues 507 to 527; the sequence is LYVVAAVVSVAYLGFVFYLGW. Over 528–568 the chain is Cytoplasmic; sequence QCLIALGMSFLDCGHTCHLGLTAQPELYLLNTMDADSLVSR. The required for early endosome targeting stretch occupies residues 555–559; sequence YLLNT. Ser564 and Ser567 each carry phosphoserine.

It belongs to the NRAMP family. In terms of assembly, forms a complex with NDFIP1 and NEDD4L, in cortical neurons, in response to iron and cobalt exposure; this interaction leads to SLC11A2 ubiquitination by NEDD4L and proteasome-dependent degradation. Interacts with NDFIP1, NDFIP2 and WWP2; this interaction leads to SLC11A2 ubiquitination by WWP2 and subsequent proteasome-dependent degradation. Interacts with COX2 and TOM6 at the outer mitochondrion membrane. Interacts with ARRDC1; this interaction regulates the incorporation of SLC11A2 into extracellular vesicles through an ubiquitination-dependent mechanism. Interacts with ARRDC4; controls the incorporation of SLC11A2 into extracellular vesicles through an ubiquitination-dependent mechanism. In terms of processing, ubiquitinated by WWP2. N-glycosylated. Ubiquitously expressed. Expressed in erythroid progenitors.

It localises to the early endosome membrane. The protein localises to the apical cell membrane. The protein resides in the late endosome membrane. It is found in the lysosome membrane. Its subcellular location is the cell membrane. It localises to the extracellular vesicle membrane. The protein localises to the mitochondrion outer membrane. The protein resides in the golgi apparatus. It is found in the trans-Golgi network membrane. Its subcellular location is the recycling endosome membrane. The catalysed reaction is Fe(2+)(in) + H(+)(in) = Fe(2+)(out) + H(+)(out). The enzyme catalyses Co(2+)(out) + H(+)(out) = Co(2+)(in) + H(+)(in). It carries out the reaction Cd(2+)(out) + H(+)(out) = Cd(2+)(in) + H(+)(in). It catalyses the reaction Mn(2+)(in) + H(+)(in) = Mn(2+)(out) + H(+)(out). The catalysed reaction is Zn(2+)(out) + H(+)(out) = Zn(2+)(in) + H(+)(in). The enzyme catalyses Ni(2+)(out) + H(+)(out) = Ni(2+)(in) + H(+)(in). It carries out the reaction H(+)(in) = H(+)(out). It catalyses the reaction Fe(2+)(in) = Fe(2+)(out). Its function is as follows. Proton-coupled metal ion symporter operating with a proton to metal ion stoichiometry of 1:1. Selectively transports various divalent metal cations, in decreasing affinity: Cd(2+) &gt; Fe(2+) &gt; Co(2+), Mn(2+) &gt;&gt; Zn(2+), Ni(2+), VO(2+). Essential for maintenance of iron homeostasis by modulating intestinal absorption of dietary Fe(2+) and TF-associated endosomal Fe(2+) transport in erythroid precursors and other cells. Enables Fe(2+) and Mn(2+) ion entry into mitochondria, and is thus expected to promote mitochondrial heme synthesis, iron-sulfur cluster biogenesis and antioxidant defense. Can mediate uncoupled fluxes of either protons or metal ions. The polypeptide is Natural resistance-associated macrophage protein 2 (SLC11A2) (Homo sapiens (Human)).